The sequence spans 432 residues: UDP-N-acetylmuramate--L-alanine ligase (432 aa).

108 to 114 contacts ATP; sequence GAHGKTS.

This sequence belongs to the MurCDEF family.

It localises to the cytoplasm. It catalyses the reaction UDP-N-acetyl-alpha-D-muramate + L-alanine + ATP = UDP-N-acetyl-alpha-D-muramoyl-L-alanine + ADP + phosphate + H(+). It functions in the pathway cell wall biogenesis; peptidoglycan biosynthesis. Functionally, cell wall formation. The protein is UDP-N-acetylmuramate--L-alanine ligase of Bacillus velezensis (strain DSM 23117 / BGSC 10A6 / LMG 26770 / FZB42) (Bacillus amyloliquefaciens subsp. plantarum).